We begin with the raw amino-acid sequence, 351 residues long: Inactive RHOMBOID-like protein 8 (351 aa).

Helical transmembrane passes span 48 to 68 (TWLV…TMGV), 130 to 150 (WLHS…FVGI), 160 to 180 (RIAV…VLFV), 183 to 203 (IPSI…LSAL), 216 to 236 (ALAI…LPFI), 239 to 259 (FANI…LFKP), and 294 to 314 (IICL…ACWG).

This sequence belongs to the peptidase S54 family. Expressed in pollen mother cell.

It is found in the golgi apparatus membrane. Functionally, probable inactive rhomboid-type serine protease. In terms of biological role, probably essential for the meiosis stage-specific callose accumulation and pollen exine formation. This is Inactive RHOMBOID-like protein 8 from Arabidopsis thaliana (Mouse-ear cress).